The following is a 365-amino-acid chain: Cobalt-precorrin-5B C(1)-methyltransferase (365 aa).

It belongs to the CbiD family.

The enzyme catalyses Co-precorrin-5B + S-adenosyl-L-methionine = Co-precorrin-6A + S-adenosyl-L-homocysteine. The protein operates within cofactor biosynthesis; adenosylcobalamin biosynthesis; cob(II)yrinate a,c-diamide from sirohydrochlorin (anaerobic route): step 6/10. In terms of biological role, catalyzes the methylation of C-1 in cobalt-precorrin-5B to form cobalt-precorrin-6A. The protein is Cobalt-precorrin-5B C(1)-methyltransferase of Geobacillus sp. (strain WCH70).